We begin with the raw amino-acid sequence, 2313 residues long: Cell surface glycoprotein 1 (2313 aa).

An N-terminal signal peptide occupies residues 1–28 (MKRKNKVLSILLTLLLIISTTSVNMSFA). 2 Cohesin domains span residues 34 to 197 (IEMV…VVEA) and 205 to 367 (VALE…EIVV). The segment covering 369-378 (GEEPGEEPTE) has biased composition (acidic residues). The disordered stretch occupies residues 369–400 (GEEPGEEPTEEPVPTETSVDPTPTVTEEPVPS). Positions 380 to 400 (PVPTETSVDPTPTVTEEPVPS) are enriched in low complexity. The region spanning 407 to 569 (VIMELDKTKV…SVVQPGEIVV (163 aa)) is the Cohesin 3 domain. The span at 571 to 580 (GEEPGEEPTE) shows a compositional bias: acidic residues. Residues 571–602 (GEEPGEEPTEEPVPTETSVDPTPTVTEEPVPS) are disordered. A compositionally biased stretch (low complexity) spans 582–602 (PVPTETSVDPTPTVTEEPVPS). Residues 609 to 771 (VIMELDKTKV…SVVQPGEIVA (163 aa)) form the Cohesin 4 domain. The span at 772 to 782 (EGEEPGEEPTE) shows a compositional bias: acidic residues. The tract at residues 772–805 (EGEEPGEEPTEEPVPTETSADPTPTVTEEPVPSE) is disordered. Low complexity predominate over residues 784-803 (PVPTETSADPTPTVTEEPVP). Residues 811-973 (VIMELDKTKV…SVVQPGEIVA (163 aa)) form the Cohesin 5 domain. Positions 974–984 (EGEEPGEEPTE) are enriched in acidic residues. The segment at 974-1007 (EGEEPGEEPTEEPVPTETPVDPTPTVTEEPVPSE) is disordered. Residues 986 to 1007 (PVPTETPVDPTPTVTEEPVPSE) are compositionally biased toward low complexity. The 163-residue stretch at 1013 to 1175 (VIMELDKTKV…SVVQPGEIVA (163 aa)) folds into the Cohesin 6 domain. 2 disordered regions span residues 1177-1203 (GEEP…EPVP) and 1374-2111 (ASDE…PDGS). Residues 1184–1203 (PVPTETPVDPTPTVTEEPVP) are compositionally biased toward low complexity. Residues 1211 to 1375 (VIMELDKTKV…IQPAPIKAAS (165 aa)) enclose the Cohesin 7 domain. Positions 1376 to 1390 (DEPIPTDTPSDEPTP) are enriched in low complexity. An approximate tandem repeats of T-P-S-D-E-P region spans residues 1383 to 2025 (TPSDEPTPSD…SDEPTPSETP (643 aa)). Over residues 1391–1411 (SDEPTPSDEPTPSDEPTPSDE) the composition is skewed to pro residues. Over residues 1423 to 1433 (PTDTPSDEPTP) the composition is skewed to low complexity. Positions 1434–1454 (SDEPTPSDEPTPSDEPTPSDE) are enriched in pro residues. The span at 1466-1476 (PTDTPSDEPTP) shows a compositional bias: low complexity. Positions 1477 to 1497 (SDEPTPSDEPTPSDEPTPSDE) are enriched in pro residues. The segment covering 1509–1519 (PTDTPSDEPTP) has biased composition (low complexity). Over residues 1520-1540 (SDEPTPSDEPTPSDEPTPSDE) the composition is skewed to pro residues. Low complexity predominate over residues 1552-1562 (PTDTPSDEPTP). The span at 1563–1595 (SDEPTPSDEPTPSDEPTPSDEPTPSDEPTPSDE) shows a compositional bias: pro residues. The segment covering 1607–1617 (PTDTPSDEPTP) has biased composition (low complexity). Pro residues predominate over residues 1618-1650 (SDEPTPSDEPTPSDEPTPSDEPTPSDEPTPSDE). The segment covering 1662 to 1672 (PTDTPSDEPTP) has biased composition (low complexity). Positions 1673 to 1693 (SDEPTPSDEPTPSDEPTPSDE) are enriched in pro residues. The segment covering 1705–1715 (PTDTPSDEPTP) has biased composition (low complexity). The span at 1716 to 1736 (SDEPTPSDEPTPSDEPTPSDE) shows a compositional bias: pro residues. The segment covering 1748 to 1758 (PTDTPSDEPTP) has biased composition (low complexity). A compositionally biased stretch (pro residues) spans 1759-1779 (SDEPTPSDEPTPSDEPTPSDE). Residues 1791–1801 (PTDTPSDEPTP) show a composition bias toward low complexity. The span at 1802–1822 (SDEPTPSDEPTPSDEPTPSDE) shows a compositional bias: pro residues. Residues 1834–1844 (PTDTPSDEPTP) are compositionally biased toward low complexity. Pro residues predominate over residues 1845–1865 (SDEPTPSDEPTPSDEPTPSDE). A compositionally biased stretch (low complexity) spans 1877-1887 (PTDTPSDEPTP). Residues 1888 to 1908 (SDEPTPSDEPTPSDEPTPSDE) are compositionally biased toward pro residues. The segment covering 1920–1930 (PTDTPSDEPTP) has biased composition (low complexity). Over residues 1931-1963 (SDEPTPSDEPTPSDEPTPSDEPTPSDEPTPSDE) the composition is skewed to pro residues. The span at 1975 to 1985 (PTDTPSDEPTP) shows a compositional bias: low complexity. 2 stretches are compositionally biased toward pro residues: residues 1986–2018 (SDEP…PSDE) and 2027–2039 (EPTP…PTPS). The segment covering 2045-2062 (GSGGSGGSGGGGGGGGGT) has biased composition (gly residues). 3 SLH domains span residues 2067–2140 (PTPT…YGAQ), 2141–2204 (SASP…EIMS), and 2211–2274 (ISNP…GAPK). Residues 2073–2082 (SKPTSTPAPT) are compositionally biased toward low complexity.

Assembled into mono-layered crystalline arrays.

Its subcellular location is the secreted. It localises to the cell wall. It is found in the S-layer. The protein is Cell surface glycoprotein 1 (olpB) of Acetivibrio thermocellus (strain ATCC 27405 / DSM 1237 / JCM 9322 / NBRC 103400 / NCIMB 10682 / NRRL B-4536 / VPI 7372) (Clostridium thermocellum).